A 213-amino-acid chain; its full sequence is Glycerol-3-phosphate acyltransferase (213 aa).

6 helical membrane-spanning segments follow: residues 2–22 (ITIVLLILAYLLGSIPSGLWI), 52–74 (AGMATFVIDFFKGTLATLLPIIF), 81–100 (PLIFGLLAVIGHTFPIFAGF), 112–132 (VIFGFAPIFCLYLAIIFFGAL), 143–163 (VTASIAAVIGVLLFPLFGFIL), and 164–184 (SNYDSLFIAIILALASLIIIR).

The protein belongs to the PlsY family. In terms of assembly, probably interacts with PlsX.

It localises to the cell membrane. The catalysed reaction is an acyl phosphate + sn-glycerol 3-phosphate = a 1-acyl-sn-glycero-3-phosphate + phosphate. The protein operates within lipid metabolism; phospholipid metabolism. Its function is as follows. Catalyzes the transfer of an acyl group from acyl-phosphate (acyl-PO(4)) to glycerol-3-phosphate (G3P) to form lysophosphatidic acid (LPA). This enzyme utilizes acyl-phosphate as fatty acyl donor, but not acyl-CoA or acyl-ACP. This chain is Glycerol-3-phosphate acyltransferase, found in Streptococcus pneumoniae (strain ATCC 700669 / Spain 23F-1).